Reading from the N-terminus, the 439-residue chain is Probable aspartic proteinase GIP2 (439 aa).

The signal sequence occupies residues 1–23; it reads MASSCCLHAILLCSLLFITSTTA. Residues 47–420 enclose the Peptidase A1 domain; that stretch reads YLTQIQQRTP…DLARSRLGFT (374 aa). N-linked (GlcNAc...) asparagine glycosylation is found at Asn-116, Asn-280, Asn-323, and Asn-434.

The protein belongs to the peptidase A1 family. Interacts with the Phytophtora parasitica xyloglucanase XEG1 and xyloglucanase-like XLP1. Possesses stronger binding affinity with XLP1, a truncated paralog of P.parasitica XEG1 which has no enzyme activity.

It is found in the secreted. Its subcellular location is the extracellular space. It localises to the apoplast. Functionally, involved in plant defense against Phytophtora parasitica. Contributes positively to Nicotiana resistance against P.parasitica. Binds the P.parasitica xyloglucanase XEG1 and inhibits its cell wall degrading enzyme activity and its contribution as P.parasitica virulence factor. XEG1 acts as an important virulence factor during P.parasitica infection but also acts as a pathogen-associated molecular pattern (PAMP) in Nictotiana species, where it can trigger defense responses including cell death. Its function is as follows. (Microbial infection) Possesses stronger binding affinity with XLP1, a truncated paralog of P.parasitica XEG1 which has no enzyme activity. Is impaired in its inhibitor activity towards the P.parasitica xyloglucanase XEG1 when hijacked by XLP1 binding. This chain is Probable aspartic proteinase GIP2, found in Nicotiana benthamiana.